Here is a 75-residue protein sequence, read N- to C-terminus: Small ribosomal subunit protein bS18 (75 aa).

This sequence belongs to the bacterial ribosomal protein bS18 family. In terms of assembly, part of the 30S ribosomal subunit. Forms a tight heterodimer with protein bS6.

In terms of biological role, binds as a heterodimer with protein bS6 to the central domain of the 16S rRNA, where it helps stabilize the platform of the 30S subunit. This Colwellia psychrerythraea (strain 34H / ATCC BAA-681) (Vibrio psychroerythus) protein is Small ribosomal subunit protein bS18.